A 359-amino-acid polypeptide reads, in one-letter code: DNA integrity scanning protein DisA (359 aa).

The 139-residue stretch at 7 to 145 folds into the DAC domain; sequence DDIFRATLAA…AGRRYVLDGA (139 aa). Residues glycine 74, leucine 92, and 105 to 109 each bind ATP; that span reads TRHRT.

Belongs to the DisA family. In terms of assembly, homooctamer. Requires Mg(2+) as cofactor.

The catalysed reaction is 2 ATP = 3',3'-c-di-AMP + 2 diphosphate. In terms of biological role, participates in a DNA-damage check-point that is active prior to asymmetric division when DNA is damaged. DisA forms globular foci that rapidly scan along the chromosomes during sporulation, searching for lesions. When a lesion is present, DisA pauses at the lesion site. This triggers a cellular response that culminates in a temporary block in sporulation initiation. Functionally, also has diadenylate cyclase activity, catalyzing the condensation of 2 ATP molecules into cyclic di-AMP (c-di-AMP). c-di-AMP acts as a signaling molecule that couples DNA integrity with progression of sporulation. The rise in c-di-AMP level generated by DisA while scanning the chromosome, operates as a positive signal that advances sporulation; upon encountering a lesion, the DisA focus arrests at the damaged site and halts c-di-AMP synthesis. In Parafrankia sp. (strain EAN1pec), this protein is DNA integrity scanning protein DisA.